Consider the following 267-residue polypeptide: L-aspartate dehydrogenase (267 aa).

The NAD(+) site is built by Ala-124 and Asn-190. The active site involves His-218.

It belongs to the L-aspartate dehydrogenase family.

It catalyses the reaction L-aspartate + NADP(+) + H2O = oxaloacetate + NH4(+) + NADPH + H(+). The enzyme catalyses L-aspartate + NAD(+) + H2O = oxaloacetate + NH4(+) + NADH + H(+). It participates in cofactor biosynthesis; NAD(+) biosynthesis; iminoaspartate from L-aspartate (dehydrogenase route): step 1/1. In terms of biological role, specifically catalyzes the NAD or NADP-dependent dehydrogenation of L-aspartate to iminoaspartate. The sequence is that of L-aspartate dehydrogenase from Methanococcus maripaludis (strain C7 / ATCC BAA-1331).